We begin with the raw amino-acid sequence, 251 residues long: Small ribosomal subunit protein uS3 (251 aa).

In terms of domain architecture, KH type-2 spans 39-112 (IRKYINEVYA…NIILNVVEVR (74 aa)). The interval 222-251 (EEKKPAKKFNKKPVAAKPANKEEKSSKEVK) is disordered. Positions 240-251 (ANKEEKSSKEVK) are enriched in basic and acidic residues.

This sequence belongs to the universal ribosomal protein uS3 family. As to quaternary structure, part of the 30S ribosomal subunit. Forms a tight complex with proteins S10 and S14.

Functionally, binds the lower part of the 30S subunit head. Binds mRNA in the 70S ribosome, positioning it for translation. In Anaeroplasma abactoclasticum, this protein is Small ribosomal subunit protein uS3.